The sequence spans 492 residues: Katanin p60 ATPase-containing subunit A1 (492 aa).

Residues 91-158 are disordered; the sequence is PAHDGEVWSL…MKPVRAREKK (68 aa). Polar residues predominate over residues 138-147; it reads LPSSKNTNNV. 250 to 257 is a binding site for ATP; that stretch reads GPPGTGKT.

This sequence belongs to the AAA ATPase family. Katanin p60 subunit A1 subfamily. As to quaternary structure, can homooligomerize into hexameric rings, which may be promoted by interaction with microtubules. Interacts with katnb1, which may serve as a targeting subunit.

Its subcellular location is the cytoplasm. It localises to the cytoskeleton. The protein localises to the microtubule organizing center. The protein resides in the centrosome. It is found in the spindle pole. Its subcellular location is the spindle. The catalysed reaction is n ATP + n H2O + a microtubule = n ADP + n phosphate + (n+1) alpha/beta tubulin heterodimers.. With respect to regulation, ATPase activity is stimulated by microtubules, which promote homooligomerization. ATP-dependent microtubule severing is stimulated by interaction with katnb1. In terms of biological role, catalytic subunit of a complex which severs microtubules in an ATP-dependent manner. Microtubule severing may promote rapid reorganization of cellular microtubule arrays and the release of microtubules from the centrosome following nucleation. This Xenopus tropicalis (Western clawed frog) protein is Katanin p60 ATPase-containing subunit A1 (katna1).